We begin with the raw amino-acid sequence, 81 residues long: Acyl carrier protein (81 aa).

A Carrier domain is found at 1-79; sequence MDREEILQKI…EAVDYVVEHQ (79 aa). Residue Ser39 is modified to O-(pantetheine 4'-phosphoryl)serine.

It belongs to the acyl carrier protein (ACP) family. Post-translationally, 4'-phosphopantetheine is transferred from CoA to a specific serine of apo-ACP by AcpS. This modification is essential for activity because fatty acids are bound in thioester linkage to the sulfhydryl of the prosthetic group.

The protein localises to the cytoplasm. It functions in the pathway lipid metabolism; fatty acid biosynthesis. Its function is as follows. Carrier of the growing fatty acid chain in fatty acid biosynthesis. This chain is Acyl carrier protein, found in Rubrobacter xylanophilus (strain DSM 9941 / JCM 11954 / NBRC 16129 / PRD-1).